The following is a 255-amino-acid chain: NAD kinase (255 aa).

Asp44 acts as the Proton acceptor in catalysis. Residues 44 to 45 (DG), His49, 114 to 115 (NE), Asp144, Ala152, 155 to 160 (SAYNLS), and Gln216 contribute to the NAD(+) site.

This sequence belongs to the NAD kinase family. A divalent metal cation serves as cofactor.

It localises to the cytoplasm. It carries out the reaction NAD(+) + ATP = ADP + NADP(+) + H(+). Involved in the regulation of the intracellular balance of NAD and NADP, and is a key enzyme in the biosynthesis of NADP. Catalyzes specifically the phosphorylation on 2'-hydroxyl of the adenosine moiety of NAD to yield NADP. The chain is NAD kinase from Rickettsia rickettsii (strain Iowa).